Here is a 144-residue protein sequence, read N- to C-terminus: Putative sugar phosphate isomerase RBE_0278 (144 aa).

Residue His-12 coordinates substrate. His-101 acts as the Proton donor in catalysis. Residue Arg-135 participates in substrate binding.

This sequence belongs to the LacAB/RpiB family.

This Rickettsia bellii (strain RML369-C) protein is Putative sugar phosphate isomerase RBE_0278.